An 89-amino-acid polypeptide reads, in one-letter code: Sec-independent protein translocase protein TatA (89 aa).

A helical transmembrane segment spans residues 1–21 (MGGISIWQLLIIAVIVVLLFG). The interval 65–89 (ADKQADTNQEQAKTEDAKRHDKEQV) is disordered. A compositionally biased stretch (basic and acidic residues) spans 76–89 (AKTEDAKRHDKEQV).

It belongs to the TatA/E family. The Tat system comprises two distinct complexes: a TatABC complex, containing multiple copies of TatA, TatB and TatC subunits, and a separate TatA complex, containing only TatA subunits. Substrates initially bind to the TatABC complex, which probably triggers association of the separate TatA complex to form the active translocon.

It localises to the cell inner membrane. Its function is as follows. Part of the twin-arginine translocation (Tat) system that transports large folded proteins containing a characteristic twin-arginine motif in their signal peptide across membranes. TatA could form the protein-conducting channel of the Tat system. In Shigella flexneri, this protein is Sec-independent protein translocase protein TatA.